The primary structure comprises 85 residues: ATP synthase subunit c (85 aa).

2 helical membrane passes run 22 to 39 and 65 to 85; these read AIGAGLAVIGAGLGIGKI and AALIEGVALLAVVVCLLVFFL.

This sequence belongs to the ATPase C chain family. As to quaternary structure, F-type ATPases have 2 components, F(1) - the catalytic core - and F(0) - the membrane proton channel. F(1) has five subunits: alpha(3), beta(3), gamma(1), delta(1), epsilon(1). F(0) has three main subunits: a(1), b(2) and c(10-14). The alpha and beta chains form an alternating ring which encloses part of the gamma chain. F(1) is attached to F(0) by a central stalk formed by the gamma and epsilon chains, while a peripheral stalk is formed by the delta and b chains.

It is found in the cell inner membrane. F(1)F(0) ATP synthase produces ATP from ADP in the presence of a proton or sodium gradient. F-type ATPases consist of two structural domains, F(1) containing the extramembraneous catalytic core and F(0) containing the membrane proton channel, linked together by a central stalk and a peripheral stalk. During catalysis, ATP synthesis in the catalytic domain of F(1) is coupled via a rotary mechanism of the central stalk subunits to proton translocation. Functionally, key component of the F(0) channel; it plays a direct role in translocation across the membrane. A homomeric c-ring of between 10-14 subunits forms the central stalk rotor element with the F(1) delta and epsilon subunits. The protein is ATP synthase subunit c of Bacteroides thetaiotaomicron (strain ATCC 29148 / DSM 2079 / JCM 5827 / CCUG 10774 / NCTC 10582 / VPI-5482 / E50).